The chain runs to 225 residues: Platelet-derived growth factor subunit B (225 aa).

A signal peptide spans 1–12 (LPLCCYLRLVSA). A propeptide spans 13-73 (EGDPIPEELY…ESESSSRGRR (61 aa)) (removed in mature form). N-linked (GlcNAc...) asparagine glycosylation is present at Asn-55. Disulfide bonds link Cys-89/Cys-133, Cys-122/Cys-170, and Cys-126/Cys-172. Residues 183 to 225 (RSPGTSREHRAKTPQTRVTVRTVRIRRPPKGKHRKFKHTHDKK) constitute a propeptide, removed in mature form.

It belongs to the PDGF/VEGF growth factor family. Antiparallel homodimer; disulfide-linked. Antiparallel heterodimer with PDGFA; disulfide-linked. The PDGFB homodimer interacts with PDGFRA and PDGFRB homodimers, and with heterodimers formed by PDGFRA and PDGFRB. The heterodimer composed of PDGFA and PDGFB interacts with PDGFRB homodimers, and with heterodimers formed by PDGFRA and PDGFRB. Interacts with XLKD1. Interacts with LRP1. Interacts with SORL1 (via the N-terminal ectodomain). Interacts with CD82; this interaction inhibits PDGFB-mediated signaling pathway. In terms of tissue distribution, expressed in a distinct subpopulation of smooth muscle cells in injured arteries.

The protein resides in the secreted. Functionally, growth factor that plays an essential role in the regulation of embryonic development, cell proliferation, cell migration, survival and chemotaxis. Potent mitogen for cells of mesenchymal origin. Required for normal proliferation and recruitment of pericytes and vascular smooth muscle cells in the central nervous system, skin, lung, heart and placenta. Required for normal blood vessel development, and for normal development of kidney glomeruli. Plays an important role in wound healing. Signaling is modulated by the formation of heterodimers with PDGFA. This chain is Platelet-derived growth factor subunit B (Pdgfb), found in Rattus norvegicus (Rat).